Consider the following 547-residue polypeptide: Membrane protein insertase YidC (547 aa).

Residues 8-28 (LRLILAIALSFLFIALYSYFF) form a helical membrane-spanning segment. The segment covering 37–50 (QTTKQETTNNHTAT) has biased composition (low complexity). Residues 37-62 (QTTKQETTNNHTATSPNAPNAQHFST) form a disordered region. The segment covering 51-62 (SPNAPNAQHFST) has biased composition (polar residues). A run of 5 helical transmembrane segments spans residues 325-345 (VIEY…LDYL), 348-368 (FVGN…IILY), 414-434 (GANP…FFAI), 449-469 (WILW…PLLM), and 495-515 (LLPL…VLYW).

The protein belongs to the OXA1/ALB3/YidC family. Type 1 subfamily. As to quaternary structure, interacts with the Sec translocase complex via SecD. Specifically interacts with transmembrane segments of nascent integral membrane proteins during membrane integration.

It localises to the cell inner membrane. In terms of biological role, required for the insertion and/or proper folding and/or complex formation of integral membrane proteins into the membrane. Involved in integration of membrane proteins that insert both dependently and independently of the Sec translocase complex, as well as at least some lipoproteins. Aids folding of multispanning membrane proteins. This chain is Membrane protein insertase YidC, found in Helicobacter pylori (strain ATCC 700392 / 26695) (Campylobacter pylori).